The chain runs to 234 residues: Ubiquinone biosynthesis O-methyltransferase (234 aa).

Residues Arg-36, Gly-56, Asp-77, and Met-125 each contribute to the S-adenosyl-L-methionine site.

This sequence belongs to the methyltransferase superfamily. UbiG/COQ3 family.

The catalysed reaction is a 3-demethylubiquinol + S-adenosyl-L-methionine = a ubiquinol + S-adenosyl-L-homocysteine + H(+). It carries out the reaction a 3-(all-trans-polyprenyl)benzene-1,2-diol + S-adenosyl-L-methionine = a 2-methoxy-6-(all-trans-polyprenyl)phenol + S-adenosyl-L-homocysteine + H(+). The protein operates within cofactor biosynthesis; ubiquinone biosynthesis. O-methyltransferase that catalyzes the 2 O-methylation steps in the ubiquinone biosynthetic pathway. This Actinobacillus pleuropneumoniae serotype 7 (strain AP76) protein is Ubiquinone biosynthesis O-methyltransferase.